A 126-amino-acid chain; its full sequence is Small ribosomal subunit protein uS12 (126 aa).

The tract at residues 1 to 23 is disordered; it reads MPTISQLVRKGRKTVASKSTAPA. D89 is modified (3-methylthioaspartic acid).

The protein belongs to the universal ribosomal protein uS12 family. In terms of assembly, part of the 30S ribosomal subunit. Contacts proteins S8 and S17. May interact with IF1 in the 30S initiation complex.

Functionally, with S4 and S5 plays an important role in translational accuracy. Its function is as follows. Interacts with and stabilizes bases of the 16S rRNA that are involved in tRNA selection in the A site and with the mRNA backbone. Located at the interface of the 30S and 50S subunits, it traverses the body of the 30S subunit contacting proteins on the other side and probably holding the rRNA structure together. The combined cluster of proteins S8, S12 and S17 appears to hold together the shoulder and platform of the 30S subunit. This is Small ribosomal subunit protein uS12 from Clostridium perfringens (strain ATCC 13124 / DSM 756 / JCM 1290 / NCIMB 6125 / NCTC 8237 / Type A).